Consider the following 498-residue polypeptide: Cytochrome P450 monooxygenase idtP (498 aa).

An N-terminal signal peptide occupies residues 1–20 (MFLLHILAIGACLLWYFVRS). Residue Cys439 coordinates heme.

It belongs to the cytochrome P450 family. Requires heme as cofactor.

It functions in the pathway secondary metabolite biosynthesis. In terms of biological role, cytochrome P450 monooxygenase; part of the gene cluster that mediates the biosynthesis of paspalitrems, indole-diterpene (IDT) mycotoxins that are potent tremorgens in mammals. The geranylgeranyl diphosphate (GGPP) synthase idtG is proposed to catalyze the first step in IDT biosynthesis via catalysis of a series of iterative condensations of isopentenyl diphosphate (IPP) with dimethylallyl diphosphate (DMAPP), geranyl diphosphate (GPP), and farnesyl diphosphate (FPP), to form GGPP. Condensation of indole-3-glycerol phosphate with GGPP by the prenyltransferase idtC then forms 3-geranylgeranylindole (3-GGI). Epoxidation of the two terminal alkenes of the geranylgeranyl moiety by the FAD-dependent monooxygenase idtM, and cyclization by the terpene cyclase idtB then leads to the production of paspaline. The cytochrome P450 monooxygenase idtP then catalyzes oxidative elimination of the pendant methyl group at C-12 of paspaline and generates the C-10 ketone to yield 13-desoxypaxilline. The cytochrome P450 monooxygenase idtQ may catalyze the C-13 oxidation of 13-desoxypaxilline to afford paxilline. Considering that both paspalicine and paxilline were detected in C.paspali, idtQ also catalyzes the formation of paspalinine from 13-desoxypaxilline via paspalicine as an intermediate. Finally, the alpha-prenyltransferase idtF prenylates paspalinine at the C-20 or the C-21 positions to yield paspalitrems A and C, respectively. The hydroxylation of paspalitrem A at C-32 by a still unknown oxidase affords paspalitrem B. The protein is Cytochrome P450 monooxygenase idtP of Claviceps paspali (Rye ergot fungus).